Consider the following 143-residue polypeptide: Transcriptional regulator MraZ (143 aa).

SpoVT-AbrB domains follow at residues 5 to 47 (EYQH…PQEE) and 76 to 119 (ASEC…SKSE).

The protein belongs to the MraZ family. As to quaternary structure, forms oligomers.

The protein localises to the cytoplasm. It localises to the nucleoid. In Listeria monocytogenes serotype 4b (strain CLIP80459), this protein is Transcriptional regulator MraZ.